Here is a 717-residue protein sequence, read N- to C-terminus: SAGA factor-like TAF6 (717 aa).

A sufficient for interaction with Taf9 region spans residues 123–204 (KSYAGFDPRS…VPPMLGAMDS (82 aa)).

This sequence belongs to the TAF6 family. In terms of assembly, component of the Spt-Ada-Gcn5 acetyltransferase (SAGA) complex consisting of wda/Taf5L, Saf6, Taf9, Taf10b, Taf12, Ada1, Spt3, Spt7, Spt20, Sf3b3, Sf3b5, Nipped-A/Tra1, a histone acetyltransferase (HAT) module made up of Gcn5, Ada2b (Isoform B), Ada3 and Sgf29, and a deubiquitinase (DUB) module made up of not/nonstop, Sgf11 and e(y)2 tethered to SAGA by Atxn7; not essential for SAGA complex assembly, histone-modifying activity or chromosomal recruitment. Interacts (via N-terminal histone-fold domain) with Taf9 (via N-terminal histone-fold domain); the interaction is probably direct. Probably forms a histone-like heterooctamer structure with Taf9, Taf12 and Taf10b.

The protein resides in the nucleus. It is found in the chromosome. Its function is as follows. Component of the transcription regulatory complex SAGA, a multiprotein complex that activates transcription by remodeling chromatin and mediating histone acetylation and deubiquitination. The SAGA complex predominantly acetylates histone H3. Involved in SAGA complex coactivator function but not essential for SAGA complex assembly, histone-modifying activity or chromosomal recruitment. Required for oogenesis; involved in transcriptional activation. The sequence is that of SAGA factor-like TAF6 from Drosophila melanogaster (Fruit fly).